The chain runs to 124 residues: S-adenosylmethionine decarboxylase proenzyme (124 aa).

Catalysis depends on S63, which acts as the Schiff-base intermediate with substrate; via pyruvic acid. Residue S63 is modified to Pyruvic acid (Ser); by autocatalysis. H68 functions as the Proton acceptor; for processing activity in the catalytic mechanism. C83 serves as the catalytic Proton donor; for catalytic activity.

This sequence belongs to the prokaryotic AdoMetDC family. Type 1 subfamily. In terms of assembly, heterotetramer of two alpha and two beta chains arranged as a dimer of alpha/beta heterodimers. Pyruvate serves as cofactor. In terms of processing, is synthesized initially as an inactive proenzyme. Formation of the active enzyme involves a self-maturation process in which the active site pyruvoyl group is generated from an internal serine residue via an autocatalytic post-translational modification. Two non-identical subunits are generated from the proenzyme in this reaction, and the pyruvate is formed at the N-terminus of the alpha chain, which is derived from the carboxyl end of the proenzyme. The post-translation cleavage follows an unusual pathway, termed non-hydrolytic serinolysis, in which the side chain hydroxyl group of the serine supplies its oxygen atom to form the C-terminus of the beta chain, while the remainder of the serine residue undergoes an oxidative deamination to produce ammonia and the pyruvoyl group blocking the N-terminus of the alpha chain.

The catalysed reaction is S-adenosyl-L-methionine + H(+) = S-adenosyl 3-(methylsulfanyl)propylamine + CO2. Its pathway is amine and polyamine biosynthesis; S-adenosylmethioninamine biosynthesis; S-adenosylmethioninamine from S-adenosyl-L-methionine: step 1/1. Its function is as follows. Catalyzes the decarboxylation of S-adenosylmethionine to S-adenosylmethioninamine (dcAdoMet), the propylamine donor required for the synthesis of the polyamines spermine and spermidine from the diamine putrescine. This Geobacillus sp. (strain WCH70) protein is S-adenosylmethionine decarboxylase proenzyme.